We begin with the raw amino-acid sequence, 328 residues long: Biotin synthase (328 aa).

The region spanning Asn-43–Arg-272 is the Radical SAM core domain. [4Fe-4S] cluster is bound by residues Cys-58, Cys-62, and Cys-65. 4 residues coordinate [2Fe-2S] cluster: Cys-103, Cys-135, Cys-195, and Arg-267.

It belongs to the radical SAM superfamily. Biotin synthase family. Homodimer. [4Fe-4S] cluster serves as cofactor. The cofactor is [2Fe-2S] cluster.

It carries out the reaction (4R,5S)-dethiobiotin + (sulfur carrier)-SH + 2 reduced [2Fe-2S]-[ferredoxin] + 2 S-adenosyl-L-methionine = (sulfur carrier)-H + biotin + 2 5'-deoxyadenosine + 2 L-methionine + 2 oxidized [2Fe-2S]-[ferredoxin]. The protein operates within cofactor biosynthesis; biotin biosynthesis; biotin from 7,8-diaminononanoate: step 2/2. Catalyzes the conversion of dethiobiotin (DTB) to biotin by the insertion of a sulfur atom into dethiobiotin via a radical-based mechanism. The polypeptide is Biotin synthase (Allorhizobium ampelinum (strain ATCC BAA-846 / DSM 112012 / S4) (Agrobacterium vitis (strain S4))).